A 422-amino-acid chain; its full sequence is Glutamate-1-semialdehyde 2,1-aminomutase (422 aa).

An N6-(pyridoxal phosphate)lysine modification is found at Lys258.

The protein belongs to the class-III pyridoxal-phosphate-dependent aminotransferase family. HemL subfamily. In terms of assembly, homodimer. The cofactor is pyridoxal 5'-phosphate.

It localises to the cytoplasm. It catalyses the reaction (S)-4-amino-5-oxopentanoate = 5-aminolevulinate. It functions in the pathway porphyrin-containing compound metabolism; protoporphyrin-IX biosynthesis; 5-aminolevulinate from L-glutamyl-tRNA(Glu): step 2/2. This chain is Glutamate-1-semialdehyde 2,1-aminomutase, found in Chlamydia trachomatis serovar D (strain ATCC VR-885 / DSM 19411 / UW-3/Cx).